Consider the following 298-residue polypeptide: Leucine-rich repeat-containing protein 55 (298 aa).

The signal sequence occupies residues 1-34 (MGDTWAQLPWPGPPHSALLLVFFLLAAGVMHSDA). Residues 35 to 65 (GTSCPVLCTCRNQVVDCSNQRLFSVPPDLPM) form the LRRNT domain. Disulfide bonds link Cys-38/Cys-44 and Cys-42/Cys-51. 5 LRR repeats span residues 66-87 (DTRNLSLAHNRIAAVPPGYLTC), 90-111 (ELRVLDLRNNSLMELPPGLFLH), 114-135 (RLAHLDLSYNNLSHVPADMFRE), 138-160 (GLVHIDLSHNPWLRRVHPQAFQG), and 163-186 (HLRDLDLSYGGLAFLSLEALEGLP). In terms of domain architecture, LRRCT spans 196-251 (NPWVCGCTMEPLLKWLRNRIQRCTADSQLAECRGPPEVEGAPLFSLTEESFKACHL). 2 disulfides stabilise this stretch: Cys-200–Cys-227 and Cys-202–Cys-249. The helical transmembrane segment at 259–279 (LFIAFVGFVVSIASVATNFLL) threads the bilayer.

In terms of assembly, interacts with KCNMA1.

It is found in the cell membrane. Functionally, auxiliary protein of the large-conductance, voltage and calcium-activated potassium channel (BK alpha). Modulates gating properties by producing a marked shift in the BK channel's voltage dependence of activation in the hyperpolarizing direction, and in the absence of calcium. This Mus musculus (Mouse) protein is Leucine-rich repeat-containing protein 55 (Lrrc55).